Consider the following 331-residue polypeptide: Pantothenate kinase (331 aa).

Residue Gly-109 to Ser-116 coordinates ATP.

It belongs to the prokaryotic pantothenate kinase family.

Its subcellular location is the cytoplasm. The enzyme catalyses (R)-pantothenate + ATP = (R)-4'-phosphopantothenate + ADP + H(+). The protein operates within cofactor biosynthesis; coenzyme A biosynthesis; CoA from (R)-pantothenate: step 1/5. This chain is Pantothenate kinase, found in Rhizobium johnstonii (strain DSM 114642 / LMG 32736 / 3841) (Rhizobium leguminosarum bv. viciae).